The following is a 301-amino-acid chain: Phosphatidylcholine:diacylglycerol cholinephosphotransferase 1 (301 aa).

The segment at 1 to 39 (MSAAAAETDVSLRRRSNSLNGNHTNGVAIDGTLDNNNRR) is disordered. Transmembrane regions (helical) follow at residues 88-108 (HWIP…EYTL), 141-161 (VLAA…VWTW), 171-191 (IAAL…QLPL), 202-222 (FPVG…GSMI), and 255-275 (GHYT…DSLA). Active-site residues include H216, H256, and D260.

The protein belongs to the phosphatidylcholine:diacylglycerol cholinephosphotransferase family.

It localises to the membrane. It carries out the reaction 1,2-ditetradecanoyl-sn-glycero-3-phosphocholine + 1,2-di-(9Z-octadecenoyl)-sn-glycerol = 1,2-ditetradecanoyl-sn-glycerol + 1,2-di-(9Z-octadecenoyl)-sn-glycero-3-phosphocholine. In terms of biological role, functions as a phosphatidylcholine:diacylglycerol cholinephosphotransferase that catalyzes the transfer of the phosphocholine headgroup from phosphatidylcholine (PC) to diacylglycerol, a major reaction for the transfer of 18:1 into phosphatidylcholine for desaturation and also for the reverse transfer of 18:2 and 18:3 into the triacylglycerols synthesis pathway. This is Phosphatidylcholine:diacylglycerol cholinephosphotransferase 1 from Arabidopsis thaliana (Mouse-ear cress).